A 180-amino-acid chain; its full sequence is Transcription factor HES-7.1-A (180 aa).

The bHLH domain maps to 13 to 70 (HRKLLKPLVEKRRRERINNSLEKLRIFLFQTLKSEKLKNPKVEKAEILECTVQFLQSR). The Orange domain maps to 84 to 116 (YQSGFQHCLETTLHFMNSKPDMNGVTKELLSHQ). The short motif at 176–179 (WRPW) is the WRPW motif element.

In terms of assembly, transcription repression requires formation of a complex with a corepressor protein of the Groucho/TLE family. As to expression, expressed in the presumptive midbrain-hindbrain boundary (MHB) as early as the early gastrula stage (stage 10.5). Expression in the MHB continues through to tailbud stage. Also transiently expressed in the eye anlage at late neurula stage.

The protein resides in the nucleus. Transcriptional repressor. Represses transcription from both N box- and E box-containing promoters. Demarcates the prospective midbrain-hindbrain boundary (MHB) region in the neuroectoderm in early gastrulae embryos by repressing transcription of a number of target genes. The polypeptide is Transcription factor HES-7.1-A (hes7.1-a) (Xenopus laevis (African clawed frog)).